A 350-amino-acid chain; its full sequence is Protein FAM118B (350 aa).

Ala2 is subject to N-acetylalanine. Ser9 bears the Phosphoserine mark. The interval 330 to 350 (AREGQLNGSSAAHGEIRGCST) is disordered.

It belongs to the FAM118 family.

The protein localises to the nucleus. It localises to the cajal body. Functionally, may play a role in Cajal bodies formation. The polypeptide is Protein FAM118B (Fam118b) (Rattus norvegicus (Rat)).